The sequence spans 256 residues: Thiazole synthase (256 aa).

Lys95 functions as the Schiff-base intermediate with DXP in the catalytic mechanism. Residues Gly156, 182-183, and 204-205 each bind 1-deoxy-D-xylulose 5-phosphate; these read AG and NT.

The protein belongs to the ThiG family. Homotetramer. Forms heterodimers with either ThiH or ThiS.

The protein resides in the cytoplasm. The enzyme catalyses [ThiS sulfur-carrier protein]-C-terminal-Gly-aminoethanethioate + 2-iminoacetate + 1-deoxy-D-xylulose 5-phosphate = [ThiS sulfur-carrier protein]-C-terminal Gly-Gly + 2-[(2R,5Z)-2-carboxy-4-methylthiazol-5(2H)-ylidene]ethyl phosphate + 2 H2O + H(+). Its pathway is cofactor biosynthesis; thiamine diphosphate biosynthesis. Catalyzes the rearrangement of 1-deoxy-D-xylulose 5-phosphate (DXP) to produce the thiazole phosphate moiety of thiamine. Sulfur is provided by the thiocarboxylate moiety of the carrier protein ThiS. In vitro, sulfur can be provided by H(2)S. This is Thiazole synthase from Escherichia coli O17:K52:H18 (strain UMN026 / ExPEC).